Here is a 101-residue protein sequence, read N- to C-terminus: Phosphoribosyl-AMP cyclohydrolase (101 aa).

D71 lines the Mg(2+) pocket. C72 serves as a coordination point for Zn(2+). Positions 73 and 75 each coordinate Mg(2+). Positions 88 and 95 each coordinate Zn(2+).

This sequence belongs to the PRA-CH family. Homodimer. It depends on Mg(2+) as a cofactor. Requires Zn(2+) as cofactor.

The protein resides in the cytoplasm. The enzyme catalyses 1-(5-phospho-beta-D-ribosyl)-5'-AMP + H2O = 1-(5-phospho-beta-D-ribosyl)-5-[(5-phospho-beta-D-ribosylamino)methylideneamino]imidazole-4-carboxamide. Its pathway is amino-acid biosynthesis; L-histidine biosynthesis; L-histidine from 5-phospho-alpha-D-ribose 1-diphosphate: step 3/9. Catalyzes the hydrolysis of the adenine ring of phosphoribosyl-AMP. The sequence is that of Phosphoribosyl-AMP cyclohydrolase from Bacillus cereus (strain Q1).